A 518-amino-acid polypeptide reads, in one-letter code: GRIN2-like protein (518 aa).

Disordered stretches follow at residues 1–23 (MGLE…QSRT) and 467–500 (QTEP…FRTM). Residues 476-494 (KSDEDPLNKEPSSDKMEKK) show a composition bias toward basic and acidic residues.

As to quaternary structure, may interact with GNAO1.

Its function is as follows. May be involved in neurite outgrowth. The chain is GRIN2-like protein from Gallus gallus (Chicken).